A 570-amino-acid chain; its full sequence is Interleukin-1 receptor accessory protein (570 aa).

An N-terminal signal peptide occupies residues 1-20; that stretch reads MGLPWCLMSLFFCGILQSHA. 3 Ig-like C2-type domains span residues 21 to 128, 141 to 230, and 243 to 348; these read SERC…VAFP, PMRL…RTMT, and PHIY…AKVK. At 21-367 the chain is on the extracellular side; the sequence is SERCDDWGLD…VELACGFGAT (347 aa). 5 disulfides stabilise this stretch: cysteine 24–cysteine 122, cysteine 47–cysteine 114, cysteine 137–cysteine 181, cysteine 160–cysteine 212, and cysteine 266–cysteine 332. An N-linked (GlcNAc...) asparagine glycan is attached at asparagine 57. Residues 69 to 85 form an essential for interaction with PTPRD region; it reads IWYWTRQDRDLEEPINF. Residues asparagine 107, asparagine 111, asparagine 118, asparagine 157, asparagine 196, and asparagine 209 are each glycosylated (N-linked (GlcNAc...) asparagine). Residues 368-388 traverse the membrane as a helical segment; that stretch reads VFLVVVLIVVYHVYWLEMVLF. Topologically, residues 389–570 are cytoplasmic; that stretch reads YRAHFGTDET…GLSYSSLKNV (182 aa). A TIR domain is found at 403-546; it reads KEYDIYVSYA…RFWKQLQVAM (144 aa). Glutamate 482 is an active-site residue. Residues 550–570 are disordered; it reads KSPRWSSSDKQGLSYSSLKNV. A compositionally biased stretch (polar residues) spans 553 to 570; sequence RWSSSDKQGLSYSSLKNV. Serine 557 bears the Phosphoserine mark.

Belongs to the interleukin-1 receptor family. As to quaternary structure, the interleukin-36 receptor complex is a heterodimer of IL1RL2 and IL1RAP; the association is inhibited by IL36RN. The interleukin-1 receptor complex is a heterodimer of IL1R1 and IL1RAP. Associates with IL1R2 to form a non-signaling interleukin-1 receptor complex. Interacts with IL-33-bound IL1RL1 to form the minimal interleukin-33 signaling complex with a 1:1:1 stoichiometry. Interacts with KIT (independently of stimulation with KITLG/SCF). A mast cell-specific KITLG/SCF-induced interleukin-33 signaling complex contains IL1RL1, IL1RAP, KIT and MYD88. Interacts (via the first immunoglobilin domain) with PTPRD (via the third immunoglobilin domain); induces pre- and postsynaptic differentiation of neurons. As to expression, highly expressed in hypothalamus, in the dentate gyrus of hippocampus, cerebral cortex, cerebellum, liver and lung.

It is found in the membrane. It catalyses the reaction NAD(+) + H2O = ADP-D-ribose + nicotinamide + H(+). Its function is as follows. Coreceptor for IL1RL2 in the IL-36 signaling system. Coreceptor with IL1R1 in the IL-1 signaling system. Associates with IL1R1 bound to IL1B to form the high affinity interleukin-1 receptor complex which mediates interleukin-1-dependent activation of NF-kappa-B and other pathways. Signaling involves the recruitment of adapter molecules such as TOLLIP, MYD88, and IRAK1 or IRAK2 via the respective TIR domains of the receptor/coreceptor subunits. Recruits TOLLIP to the signaling complex. Does not bind to interleukin-1 alone; binding of IL1RN to IL1R1, prevents its association with IL1R1 to form a signaling complex. The cellular response is modulated through a non-signaling association with the membrane IL1R2 decoy receptor. Coreceptor for IL1RL1 in the IL-33 signaling system. Can bidirectionally induce pre- and postsynaptic differentiation of neurons by trans-synaptically binding to PTPRD. May play a role in IL1B-mediated costimulation of IFNG production from T-helper 1 (Th1) cells. The sequence is that of Interleukin-1 receptor accessory protein (Il1rap) from Rattus norvegicus (Rat).